The following is a 989-amino-acid chain: MPEPSISALSFTSFVTNDDKLFEETFNFYTKLGFHATRSYVKDNRSDFELTGISTDSIKEIWLESFPLSEVVETSAGRELRKPLQESVGYQSEALLGYSPYQSDGVVIKLRLSNHDLQKNKDLPGEVTFFTASIDKLRAKLIEIGAEIIPSEIDLVEFSTKDPMGDVISFSSYPSLSSKKITSPDFFLHPKKEVRSQESIVEQVKSEEGKKKIAIITSGGDAPGMNAAVRAVTRAGIFYGCKVYACYEGYTGLVKGGDMLKELQWQDVRGLLSIGGTIIGTARSKEFRERWGRLQACYNMVSNGIDALVVCGGDGSLTGADLFRNEWPELIKELLGEGKITKEQYETHRNLTIVGLVGSIDNDMCGTDSTIGAYSSLERIIELVDYIDATAASHSRAFVVEVMGRHCGWLGLMSGIATGADYIFIPERPPSETNWKDDLKKVCLRHREKGRRKTTVIVAEGAIDDQLNPITSEEVKDVLVEIGLDTRITRLGHVQRGGAPCAFDRFLATVQGVDAVRAVLESTPAIPSPVISILENKIVRQPLVESVAQTKTVSDAIEAKDFDKALKLRDQEFATSYESFLSVSKYDDGSYLVPESSRLNIAIIHVGAPTSALNPATRVATLNSLAKGHRVFAIRNGFAGLIRHGAVRELNWIDVEDWHNTGGSEIGTNRSLPSDDMGTVAYYFQQYKFDGLIIIGGFEAFTALYQLDAARAQYPIFNIPMCCLPATVSNNVPGTEYSLGSDTCLNTLSGYCDAVKQSASASRRRTFVVEVQGGYSGYLASYAGLITGALAVYTPENPINLQTVQEDIELLTRTYEEDDGKNRSGKIFIHNEKASKVYTTDLIAAIIGEAGKGRFESRTAVPGHVQQGKSPSSIDRVNACRLAIKCCNFIEDANFQVKHNANLSADERHLRFFYDDGVKTSAVSGKSSVIDDNTSVVIGIQGSEVTFTPVKQLWEKETHHKWRKGKNVHWEQLNIVSDLLSGRLSIRTT.

The tract at residues 1-585 (MPEPSISALS…SYESFLSVSK (585 aa)) is N-terminal catalytic PFK domain 1. ATP-binding positions include Gly220, 283–284 (RS), and 313–316 (GDGS). A Mg(2+)-binding site is contributed by Asp314. Residues 359-361 (SID), Arg396, 403-405 (MGR), Glu460, Arg487, and 493-496 (HVQR) each bind beta-D-fructose 6-phosphate. Residue Asp361 is the Proton acceptor of the active site. The interdomain linker stretch occupies residues 586–599 (YDDGSYLVPESSRL). Residues 600 to 989 (NIAIIHVGAP…LSGRLSIRTT (390 aa)) form a C-terminal regulatory PFK domain 2 region. Residues Arg670, 727–731 (TVSNN), Arg765, 772–774 (QGG), Glu832, Arg858, 864–867 (HVQQ), and Arg963 contribute to the beta-D-fructose 2,6-bisphosphate site.

Belongs to the phosphofructokinase type A (PFKA) family. ATP-dependent PFK group I subfamily. Eukaryotic two domain clade 'E' sub-subfamily. In terms of assembly, heterododecamer of 4 alpha, 4 beta and 4 gamma chains. The gamma chain bridges the N-terminal halves of the alpha and beta subunits. It depends on Mg(2+) as a cofactor.

The protein localises to the cytoplasm. The catalysed reaction is beta-D-fructose 6-phosphate + ATP = beta-D-fructose 1,6-bisphosphate + ADP + H(+). It participates in carbohydrate degradation; glycolysis; D-glyceraldehyde 3-phosphate and glycerone phosphate from D-glucose: step 3/4. Its activity is regulated as follows. Allosterically activated by ADP, AMP, or fructose 2,6-bisphosphate, and allosterically inhibited by ATP or citrate. Functionally, catalyzes the phosphorylation of D-fructose 6-phosphate to fructose 1,6-bisphosphate by ATP, the first committing step of glycolysis. Involved in the modulation of glucose-induced microautophagy of peroxisomes independent of its ability to metabolize glucose intermediates. The chain is ATP-dependent 6-phosphofructokinase subunit alpha (PFK1) from Komagataella phaffii (strain GS115 / ATCC 20864) (Yeast).